Consider the following 190-residue polypeptide: MSNDTGADGGAANPDLGPDADAAAGEGLELAQFAAGCFWSVELTYQRLPGVARTEVGFSQGHHHEPTYDDVCGQGTGHAEVVRVHYDPKACPYGVLLDVFWAKHRPTTLIRQGDEAGTQYRSGIYYYTAEQERVARESLEAKQEEWKEKIVTEILPARRFYPAEEYHQRYLEKGGQSAQKGCTDPIRRYG.

The tract at residues 1 to 20 (MSNDTGADGGAANPDLGPDA) is disordered. The segment covering 10 to 20 (GAANPDLGPDA) has biased composition (low complexity).

The protein belongs to the MsrA Met sulfoxide reductase family.

It is found in the cytoplasm. The protein localises to the cytosol. The enzyme catalyses L-methionyl-[protein] + [thioredoxin]-disulfide + H2O = L-methionyl-(S)-S-oxide-[protein] + [thioredoxin]-dithiol. It carries out the reaction [thioredoxin]-disulfide + L-methionine + H2O = L-methionine (S)-S-oxide + [thioredoxin]-dithiol. Its function is as follows. Catalyzes the reduction of methionine sulfoxide (MetSO) to methionine in proteins. Plays a protective role against oxidative stress by restoring activity to proteins that have been inactivated by methionine oxidation. MSRA family specifically reduces the MetSO S-enantiomer. The protein is Peptide methionine sulfoxide reductase A2-2 (MSRA2-2) of Oryza sativa subsp. japonica (Rice).